An 853-amino-acid polypeptide reads, in one-letter code: MLSGKKAAAAAAAAAAAAAAGTEAGSGAAGGAENGSEVAAPPAGLTGPTDMATGAAGERTPRKKEPPRASPPGGLAEPPGSAGPQAGPTAGPGSATPMETGIAETPEGRRTSRRKRAKVEYREMDESLANLSEDEYYSEEERNAKAEKEKKLPPPPPQAPPEEENESEPEEPSGVEGAAFQSRLPHDRMTSQEAACFPDIISGPQQTQKVFLFIRNRTLQLWLDNPKIQLTFEATLQQLEAPYNSDTVLVHRVHSYLERHGLINFGIYKRIKPLPIKKTGKVIIIGSGVSGLAAARQLQSFGMDVTLLEARDRVGGRVATFRKGNYVADLGAMVVTGLGGNPMAVVSKQVNMELAKIKQKCPLYEANGQAVPKEKDEMVEQEFNRLLEATSYLSHQLDFNVLNNKPVSLGQALEVVIQLQEKHVKDEQIEHWKKIVKTQEELKELLNKMVNLKEKIKELHQQYKEASEVKPPRDITAEFLVKSKHRDLTALCKEYDELAETQGKLEEKLQELEANPPSDVYLSSRDRQILDWHFANLEFANATPLSTLSLKHWDQDDDFEFTGSHLTVRNGYSCVPVALAEGLDIKLNTAVRQVRYTASGCEVIAVNTRSTSQTFIYKCDAVLCTLPLGVLKQQPPAVQFVPPLPEWKTSAVQRMGFGNLNKVVLCFDRVFWDPSVNLFGHVGSTTASRGELFLFWNLYKAPILLALVAGEAAGIMENISDDVIVGRCLAILKGIFGSSAVPQPKETVVSRWRADPWARGSYSYVAAGSSGNDYDLMAQPITPGPSIPGAPQPIPRLFFAGEHTIRNYPATVHGALLSGLREAGRIADQFLGAMYTLPRQATPGVPAQQSPSM.

Positions 1–177 are disordered; that stretch reads MLSGKKAAAA…EPEEPSGVEG (177 aa). Positions 7-26 are enriched in low complexity; it reads AAAAAAAAAAAAAAGTEAGS. A Phosphothreonine modification is found at T60. The span at 76-97 shows a compositional bias: low complexity; the sequence is AEPPGSAGPQAGPTAGPGSATP. A Phosphothreonine modification is found at T105. Residues 111–152 adopt a coiled-coil conformation; sequence TSRRKRAKVEYREMDESLANLSEDEYYSEEERNAKAEKEKKL. Residues S127 and S132 each carry the phosphoserine modification. Residue Y136 is modified to Phosphotyrosine. A Phosphoserine modification is found at S138. A compositionally biased stretch (basic and acidic residues) spans 139 to 152; it reads EEERNAKAEKEKKL. Acidic residues predominate over residues 161 to 173; it reads PEEENESEPEEPS. S167 is modified (phosphoserine). Residues 175-274 enclose the SWIRM domain; sequence VEGAAFQSRL…FGIYKRIKPL (100 aa). FAD-binding positions include S290, E309, R311, R317, and 333–334; that span reads MV. The demethylase activity stretch occupies residues 301–853; the sequence is FGMDVTLLEA…GVPAQQSPSM (553 aa). Positions 429-515 form a coiled coil; the sequence is IEHWKKIVKT…EEKLQELEAN (87 aa). N6-acetyllysine occurs at positions 433, 434, and 437. Glycyl lysine isopeptide (Lys-Gly) (interchain with G-Cter in SUMO2) cross-links involve residues K443 and K470. Residue K504 forms a Glycyl lysine isopeptide (Lys-Gly) (interchain with G-Cter in ubiquitin) linkage. Residue S612 is modified to Phosphoserine. Residues E802 and 811–812 contribute to the FAD site; that span reads TV. The residue at position 850 (S850) is a Phosphoserine.

The protein belongs to the flavin monoamine oxidase family. In terms of assembly, component of a histone demethylase complex with RCOR1. Component of a BHC histone deacetylase complex that contains HDAC1, HDAC2, HMG20B, KDM1A, RCOR1 and PHF21A. The BHC complex may also contain ZMYM2, ZNF217, ZMYM3, GSE1 and GTF2I. In the complex, RCOR1 strongly enhances the demethylase activity and protects it from the proteasome while PHF21A inhibits the demethylase activity. Interacts with the androgen receptor (AR). Component of a RCOR/GFI/KDM1A/HDAC complex. Interacts directly with GFI1 and GFI1B. Interacts with SNAI1 (via SNAG domain). Interacts with INSM1. Interacts (via AOD/Tower domain) with JADE2 (via C-terminus). Interacts with ESRRB; co-occupes the core set of ESRRB targets. Interacts with SAMD1 (via WH domain); the interaction modulates KDM1A function. Interacts with RBPJ. Interacts with L3MBTL3. Interacts with ZMYND8. Requires FAD as cofactor. Acetylated by KAT8 in epithelial but not in mesenchymal cells, thereby regulating the epithelial-to-mesenchymal transition. Acetylation by KAT8 reduces KDM1A association with nucleosomes, thereby decreasing histone H3 demethylation, leading to transcription activatio of target genes. Post-translationally, polyubiquitinated by JADE2; which leads to its proteasomal degradation. Deubiquitinated by USP38; preventing it from degradation by the 26S proteasome. Ubiquitously expressed.

It is found in the nucleus. The protein resides in the chromosome. It catalyses the reaction N(6),N(6)-dimethyl-L-lysyl(4)-[histone H3] + 2 A + 2 H2O = L-lysyl(4)-[histone H3] + 2 formaldehyde + 2 AH2. With respect to regulation, the N-terminal sequences of INSM1 and SNAI1 compete with histone H3 for the same binding site and thereby inhibit histone demethylation (in vitro). Its function is as follows. Histone demethylase that can demethylate both 'Lys-4' (H3K4me) and 'Lys-9' (H3K9me) of histone H3, thereby acting as a coactivator or a corepressor, depending on the context. Acts by oxidizing the substrate by FAD to generate the corresponding imine that is subsequently hydrolyzed. Acts as a corepressor by mediating demethylation of H3K4me, a specific tag for epigenetic transcriptional activation. Demethylates both mono- (H3K4me1) and di-methylated (H3K4me2) H3K4me. May play a role in the repression of neuronal genes. Alone, it is unable to demethylate H3K4me on nucleosomes and requires the presence of RCOR1/CoREST to achieve such activity. Also acts as a coactivator of androgen receptor (ANDR)-dependent transcription, by being recruited to ANDR target genes and mediating demethylation of H3K9me, a specific tag for epigenetic transcriptional repression. The presence of PRKCB in ANDR-containing complexes, which mediates phosphorylation of 'Thr-6' of histone H3 (H3T6ph), a specific tag that prevents demethylation H3K4me, prevents H3K4me demethylase activity of KDM1A. Demethylates di-methylated 'Lys-370' of p53/TP53 which prevents interaction of p53/TP53 with TP53BP1 and represses p53/TP53-mediated transcriptional activation. Demethylates and stabilizes the DNA methylase DNMT1. Demethylates methylated 'Lys-44' and methylated 'Lys-119' of SOX2. Required for gastrulation during embryogenesis. Component of a RCOR/GFI/KDM1A/HDAC complex that suppresses, via histone deacetylase (HDAC) recruitment, a number of genes implicated in multilineage blood cell development. Facilitates epithelial-to-mesenchymal transition by acting as an effector of SNAI1-mediated transcription repression of epithelial markers E-cadherin/CDH1, CDN7 and KRT8. Required for the maintenance of the silenced state of the SNAI1 target genes E-cadherin/CDH1 and CDN7. Required for the repression of GIPR expression. The chain is Lysine-specific histone demethylase 1A from Mus musculus (Mouse).